A 341-amino-acid polypeptide reads, in one-letter code: Platelet-activating factor receptor (341 aa).

Residues 1–16 (MEHNGSFRVDSEFRYT) lie on the Extracellular side of the membrane. Residue asparagine 4 is glycosylated (N-linked (GlcNAc...) asparagine). Residues 17-38 (LFPIVYSVIFILGVVANGYVLW) form a helical membrane-spanning segment. At 39 to 54 (VFANLYPSKKLNEIKI) the chain is on the cytoplasmic side. The chain crosses the membrane as a helical span at residues 55–74 (FMVNLTMADLLFLITLPLWI). At 75-91 (VYYYNEGDWILPNFLCN) the chain is on the extracellular side. The cysteines at positions 90 and 173 are disulfide-linked. A helical transmembrane segment spans residues 92-113 (VAGCLFFINTYCSVAFLGVITY). Residues 114–133 (NRYQAVAYPIKTAQATTRKR) are Cytoplasmic-facing. The helical transmembrane segment at 134–155 (GISLSLIIWVSIVATASYFLAT) threads the bilayer. Topologically, residues 156 to 184 (DSTNLVPNKDGSGNITRCFEHYEPYSVPI) are extracellular. Asparagine 169 is a glycosylation site (N-linked (GlcNAc...) asparagine). A helical transmembrane segment spans residues 185–205 (LVVHVFIAFCFFLVFFLIFYC). Residues 206-233 (NLVIIHTLLTQPMRQQRKAGVKRRALWM) lie on the Cytoplasmic side of the membrane. A helical membrane pass occupies residues 234 to 254 (VCTVLAVFIICFVPHHVVQLP). Residues 255–275 (WTLAELGYQTNFHQAINDAHQ) lie on the Extracellular side of the membrane. Residues 276–295 (ITLCLLSTNCVLDPVIYCFL) traverse the membrane as a helical segment. Topologically, residues 296 to 341 (TKKFRKHLSEKFYSMRSSRKCSRATSDTCTEVIVPANQTPIVSLKN) are cytoplasmic.

This sequence belongs to the G-protein coupled receptor 1 family. In terms of assembly, interacts with ARRB1. Found in a range of organs. Expressed most strongly in spleen, followed by skeletal muscle, lung and small intestine. Expressed at moderate levels in the heart. Expressed at relatively low levels in the brain, liver and kidney.

It localises to the cell membrane. Functionally, receptor for platelet activating factor, a chemotactic phospholipid mediator that possesses potent inflammatory, smooth-muscle contractile and hypotensive activity. Seems to mediate its action via a G protein that activates a phosphatidylinositol-calcium second messenger system. The sequence is that of Platelet-activating factor receptor (Ptafr) from Mus musculus (Mouse).